The primary structure comprises 438 residues: MAASARGLRTLQSAHSSTTVPRLQLAVSRCYATTTSPDPPITNSSNSSNSSNSTPTPKQRITAFKDKLNAGPSFSDFVSGGGGGGASNDRVPLDPAEAYALKTALVGPPGRKKQIIRLPSWLKTPIPDTPNYRRIKSDLRGLNLHTVCEEARCPNISDCWGGSSKSAATATIMLMGDTCTRGCRFCSVKTSRTPPPLDPHEPENTAEALSRWGLGYVVMTSVDRDDLADGGARHVVETVRKVKQKAPGILLECLTGDYAGDLEMVALVATSGLDVFAHNVETVEALTPFVRDRRATFQQSLRVLKAAKEARPELITKTSIMLGLGETETQLWETLRALRAVDVDVVTFGQYMRPTKRHMAVHEYVRPEVFDLWKERALEMGFLYCASGPLVRSSYKAGEAFIENVLKKRRGEGADGGDGGNSTRREDVERLVAGGVVR.

Residues 1-31 constitute a mitochondrion transit peptide; that stretch reads MAASARGLRTLQSAHSSTTVPRLQLAVSRCY. Positions 34 to 57 are enriched in low complexity; the sequence is TTSPDPPITNSSNSSNSSNSTPTP. Residues 34 to 58 are disordered; sequence TTSPDPPITNSSNSSNSSNSTPTPK. Residues Cys148, Cys153, Cys159, Cys179, Cys183, Cys186, and Ser394 each coordinate [4Fe-4S] cluster. A Radical SAM core domain is found at 162 to 383; sequence GSSKSAATAT…KERALEMGFL (222 aa).

The protein belongs to the radical SAM superfamily. Lipoyl synthase family. [4Fe-4S] cluster serves as cofactor.

It is found in the mitochondrion. It catalyses the reaction [[Fe-S] cluster scaffold protein carrying a second [4Fe-4S](2+) cluster] + N(6)-octanoyl-L-lysyl-[protein] + 2 oxidized [2Fe-2S]-[ferredoxin] + 2 S-adenosyl-L-methionine + 4 H(+) = [[Fe-S] cluster scaffold protein] + N(6)-[(R)-dihydrolipoyl]-L-lysyl-[protein] + 4 Fe(3+) + 2 hydrogen sulfide + 2 5'-deoxyadenosine + 2 L-methionine + 2 reduced [2Fe-2S]-[ferredoxin]. The protein operates within protein modification; protein lipoylation via endogenous pathway; protein N(6)-(lipoyl)lysine from octanoyl-[acyl-carrier-protein]: step 2/2. Functionally, catalyzes the radical-mediated insertion of two sulfur atoms into the C-6 and C-8 positions of the octanoyl moiety bound to the lipoyl domains of lipoate-dependent enzymes, thereby converting the octanoylated domains into lipoylated derivatives. The protein is Lipoyl synthase, mitochondrial of Paracoccidioides brasiliensis (strain Pb18).